Reading from the N-terminus, the 486-residue chain is MVATPSTSSQTKGVVRQVIGPVLDVEFPAGKLPKILNALRIEAKNPAGQDIALTAEVQQLLGDHRVRAVAMSGTDGLVRGMEAIDTGAPISVPVGEATLGRIFNVLGEPVDEQGPVNTKDTAPIHRAAPKLTDLETKPKVFETGIKVIDLLAPYRQGGKVGLFGGAGVGKTVLIQELINNIAKEHGGVSVFGGVGERTREGNDLYEEFKESGVINADDLTQSKVALCFGQMNEPPGARMRVGLSALTMAEHFRDVNKQDVLLFVDNIFRFVQAGSEVSALLGRMPSAVGYQPTLGTDVGELQERITSTLEGSITSIQAVYVPADDLTDPAPATTFAHLDATTVLARALAAKGIYPAVDPLDSTSTMLQPSVVGDEHYKTARAVQSTLQRYKELQDIIAILGLDELSEEDRLTVDRARKIEKFLSQPFFVAEIFTGMSGKYVKLEDTIAGFNMILSGELDDLPEQAFYLVGNIDEVKAKAEKINSEK.

164 to 171 serves as a coordination point for ATP; that stretch reads GGAGVGKT.

It belongs to the ATPase alpha/beta chains family. In terms of assembly, F-type ATPases have 2 components, CF(1) - the catalytic core - and CF(0) - the membrane proton channel. CF(1) has five subunits: alpha(3), beta(3), gamma(1), delta(1), epsilon(1). CF(0) has four main subunits: a(1), b(1), b'(1) and c(9-12).

Its subcellular location is the cellular thylakoid membrane. The enzyme catalyses ATP + H2O + 4 H(+)(in) = ADP + phosphate + 5 H(+)(out). Its function is as follows. Produces ATP from ADP in the presence of a proton gradient across the membrane. The catalytic sites are hosted primarily by the beta subunits. This chain is ATP synthase subunit beta, found in Prochlorococcus marinus (strain MIT 9215).